Here is a 470-residue protein sequence, read N- to C-terminus: Acetyl-CoA decarbonylase/synthase complex subunit gamma (470 aa).

Residues 1–62 form the 4Fe-4S domain; it reads MKVKSPLEVY…DPKVKKKLEE (62 aa). The [4Fe-4S] cluster site is built by Cys18, Cys21, Cys26, and Cys43.

In terms of assembly, heterodimer of delta and gamma chains. The ACDS complex is made up of alpha, epsilon, beta, gamma and delta chains with a probable stoichiometry of (alpha(2)epsilon(2))(4)-beta(8)-(gamma(1)delta(1))(8). Corrinoid serves as cofactor. It depends on [4Fe-4S] cluster as a cofactor.

The enzyme catalyses 5,6,7,8-tetrahydrosarcinapterin + methyl-Co(III)-[corrinoid Fe-S protein] = 5-methyltetrahydrosarcinapterin + Co(I)-[corrinoid Fe-S protein] + H(+). Its function is as follows. Part of a complex that catalyzes the reversible cleavage of acetyl-CoA, allowing autotrophic growth from CO(2). This is Acetyl-CoA decarbonylase/synthase complex subunit gamma from Archaeoglobus fulgidus (strain ATCC 49558 / DSM 4304 / JCM 9628 / NBRC 100126 / VC-16).